A 406-amino-acid chain; its full sequence is Solanesyl diphosphate synthase 1, chloroplastic (406 aa).

Residues 1–71 (MMTSCRNIDL…NGIGQSQTVS (71 aa)) constitute a chloroplast transit peptide. 3 residues coordinate isopentenyl diphosphate: lysine 126, arginine 129, and histidine 164. Aspartate 171 and aspartate 175 together coordinate Mg(2+). Arginine 180 contacts an all-trans-polyprenyl diphosphate. Arginine 181 is a binding site for isopentenyl diphosphate. An all-trans-polyprenyl diphosphate-binding residues include lysine 257, threonine 258, glutamine 295, and lysine 312.

It belongs to the FPP/GGPP synthase family. Homodimer. Interacts with FBN5. Requires Mg(2+) as cofactor. Higher expression in leaves than in roots.

The protein localises to the plastid. The protein resides in the chloroplast. The enzyme catalyses 5 isopentenyl diphosphate + (2E,6E,10E)-geranylgeranyl diphosphate = all-trans-nonaprenyl diphosphate + 5 diphosphate. The catalysed reaction is isopentenyl diphosphate + (2E,6E)-farnesyl diphosphate = (2E,6E,10E)-geranylgeranyl diphosphate + diphosphate. Its function is as follows. Involved in providing solanesyl diphosphate for plastoquinone-9 (PQ-9) formation in plastids. Catalyzes the elongation of the prenyl side chain of PQ-9 in plastids. Contributes to the biosynthesis of plastochromanol-8 (PC-8) in plastids. Does not contribute to the synthesis of tocopherol or ubiquinone. PQ-9 and PC-8 are lipophilic antioxidants that act as protectant against photooxidative stress under high light stress conditions. Prefers geranylgeranyl diphosphate to farnesyl diphosphate as substrate. No activity with geranyl diphosphate or dimethylallyl diphosphate as substrate. In Arabidopsis thaliana (Mouse-ear cress), this protein is Solanesyl diphosphate synthase 1, chloroplastic.